We begin with the raw amino-acid sequence, 734 residues long: Photosystem I P700 chlorophyll a apoprotein A2 (734 aa).

Helical transmembrane passes span Ile46 to Ala69, Leu135 to Gln158, Leu175 to Ile199, Ile273 to Tyr291, Ile330 to Tyr353, Ala369 to Ile395, Ala417 to His439, and Phe517 to Val535. [4Fe-4S] cluster-binding residues include Cys559 and Cys568. The next 2 membrane-spanning stretches (helical) occupy residues Ala575–Trp596 and Leu643–Ile665. The chlorophyll a site is built by His654, Met662, and Tyr670. Residue Trp671 coordinates phylloquinone. A helical membrane pass occupies residues Leu707 to Ala727.

This sequence belongs to the PsaA/PsaB family. As to quaternary structure, the PsaA/B heterodimer binds the P700 chlorophyll special pair and subsequent electron acceptors. PSI consists of a core antenna complex that captures photons, and an electron transfer chain that converts photonic excitation into a charge separation. The eukaryotic PSI reaction center is composed of at least 11 subunits. P700 is a chlorophyll a/chlorophyll a' dimer, A0 is one or more chlorophyll a, A1 is one or both phylloquinones and FX is a shared 4Fe-4S iron-sulfur center. serves as cofactor.

It localises to the plastid. The protein localises to the chloroplast thylakoid membrane. The enzyme catalyses reduced [plastocyanin] + hnu + oxidized [2Fe-2S]-[ferredoxin] = oxidized [plastocyanin] + reduced [2Fe-2S]-[ferredoxin]. In terms of biological role, psaA and PsaB bind P700, the primary electron donor of photosystem I (PSI), as well as the electron acceptors A0, A1 and FX. PSI is a plastocyanin-ferredoxin oxidoreductase, converting photonic excitation into a charge separation, which transfers an electron from the donor P700 chlorophyll pair to the spectroscopically characterized acceptors A0, A1, FX, FA and FB in turn. Oxidized P700 is reduced on the lumenal side of the thylakoid membrane by plastocyanin. The sequence is that of Photosystem I P700 chlorophyll a apoprotein A2 from Calycanthus floridus var. glaucus (Eastern sweetshrub).